Reading from the N-terminus, the 871-residue chain is Scavenger receptor class F member 2 (871 aa).

A disordered region spans residues 1–20; it reads MEGAGPRGAGPARRRGAGGP. The signal sequence occupies residues 1–43; sequence MEGAGPRGAGPARRRGAGGPPSPLLPSLLLLLLLWMLPDTVAP. Residues 44–441 are Extracellular-facing; the sequence is QELNPRGRNV…ACHLETNQRK (398 aa). 6 EGF-like domains span residues 71 to 110, 122 to 153, 148 to 182, 183 to 212, 213 to 241, and 236 to 270; these read QGDE…ANCD, CKEL…ARCE, WGAR…AQCA, SACY…RSCN, NQCA…ARCD, and FGAR…KYCR. 18 cysteine pairs are disulfide-bonded: cysteine 75-cysteine 86, cysteine 80-cysteine 98, cysteine 100-cysteine 109, cysteine 126-cysteine 134, cysteine 128-cysteine 141, cysteine 143-cysteine 152, cysteine 156-cysteine 163, cysteine 158-cysteine 170, cysteine 172-cysteine 181, cysteine 185-cysteine 193, cysteine 187-cysteine 200, cysteine 202-cysteine 211, cysteine 215-cysteine 222, cysteine 217-cysteine 229, cysteine 231-cysteine 240, cysteine 244-cysteine 251, cysteine 246-cysteine 258, and cysteine 260-cysteine 269. The N-linked (GlcNAc...) asparagine glycan is linked to asparagine 83. Residues asparagine 310 and asparagine 365 are each glycosylated (N-linked (GlcNAc...) asparagine). One can recognise an EGF-like 7 domain in the interval 372 to 403; the sequence is CAFVCADCGSGHCDFQSGRCLCSPGVHGPHCN. 3 cysteine pairs are disulfide-bonded: cysteine 376–cysteine 384, cysteine 379–cysteine 391, and cysteine 393–cysteine 402. An N-linked (GlcNAc...) asparagine glycan is attached at asparagine 403. A helical membrane pass occupies residues 442–462; it reads GVMGAGALLVLLVCLLLSLLG. Residues 463–871 lie on the Cytoplasmic side of the membrane; the sequence is CCCACRGKDP…ELGRAGAPTL (409 aa). A Phosphoserine modification is found at serine 551. Positions 570–579 are enriched in basic and acidic residues; the sequence is EAPAESRDPE. Residues 570–871 form a disordered region; that stretch reads EAPAESRDPE…ELGRAGAPTL (302 aa). The residue at position 613 (serine 613) is a Phosphoserine. Phosphotyrosine is present on tyrosine 628. The segment covering 632-643 has biased composition (basic and acidic residues); that stretch reads ARREARPARARG. 5 positions are modified to phosphoserine: serine 651, serine 653, serine 710, serine 718, and serine 742. Positions 705–725 are enriched in basic and acidic residues; the sequence is TPSDKSAHTVEHGSPRTRDPT. The span at 821–831 shows a compositional bias: low complexity; the sequence is PPATETPGPEK. A compositionally biased stretch (basic residues) spans 844–856; sequence KKTPIQKPPRKKS. The segment covering 861 to 871 has biased composition (low complexity); the sequence is GELGRAGAPTL.

As to quaternary structure, homophilic and heterophilic interaction via its extracellular domain. Interacts with SCARF1. The heterophilic interaction with SCARF1, which is stronger than the homophilic interaction with itself, is suppressed by the presence of SCARF1 ligand such as Ac-LDL. Predominantly expressed in endothelial cells. Expressed in heart, placenta, lung, kidney, spleen, small intestine and ovary.

The protein localises to the membrane. In terms of biological role, probable adhesion protein, which mediates homophilic and heterophilic interactions. In contrast to SCARF1, it poorly mediates the binding and degradation of acetylated low density lipoprotein (Ac-LDL). This chain is Scavenger receptor class F member 2 (SCARF2), found in Homo sapiens (Human).